A 363-amino-acid polypeptide reads, in one-letter code: tRNA/tmRNA (uracil-C(5))-methyltransferase (363 aa).

Q187, Y215, N220, E236, and D296 together coordinate S-adenosyl-L-methionine. The Nucleophile role is filled by C321. E355 acts as the Proton acceptor in catalysis.

This sequence belongs to the class I-like SAM-binding methyltransferase superfamily. RNA M5U methyltransferase family. TrmA subfamily.

It carries out the reaction uridine(54) in tRNA + S-adenosyl-L-methionine = 5-methyluridine(54) in tRNA + S-adenosyl-L-homocysteine + H(+). It catalyses the reaction uridine(341) in tmRNA + S-adenosyl-L-methionine = 5-methyluridine(341) in tmRNA + S-adenosyl-L-homocysteine + H(+). Functionally, dual-specificity methyltransferase that catalyzes the formation of 5-methyluridine at position 54 (m5U54) in all tRNAs, and that of position 341 (m5U341) in tmRNA (transfer-mRNA). This is tRNA/tmRNA (uracil-C(5))-methyltransferase from Haemophilus influenzae (strain PittEE).